We begin with the raw amino-acid sequence, 307 residues long: Glycerol-3-phosphate dehydrogenase [NAD(P)+] (307 aa).

NADPH-binding residues include Trp14, Arg34, Arg35, and Lys82. Sn-glycerol 3-phosphate-binding residues include Lys82 and Gly110. Residue Ser114 participates in NADPH binding. Positions 165, 218, 228, 229, and 230 each coordinate sn-glycerol 3-phosphate. The active-site Proton acceptor is the Lys165. Arg229 provides a ligand contact to NADPH. Glu255 contacts NADPH.

The protein belongs to the NAD-dependent glycerol-3-phosphate dehydrogenase family.

The protein resides in the cytoplasm. It catalyses the reaction sn-glycerol 3-phosphate + NAD(+) = dihydroxyacetone phosphate + NADH + H(+). The catalysed reaction is sn-glycerol 3-phosphate + NADP(+) = dihydroxyacetone phosphate + NADPH + H(+). The protein operates within membrane lipid metabolism; glycerophospholipid metabolism. In terms of biological role, catalyzes the reduction of the glycolytic intermediate dihydroxyacetone phosphate (DHAP) to sn-glycerol 3-phosphate (G3P), the key precursor for phospholipid synthesis. This Nostoc sp. (strain PCC 7120 / SAG 25.82 / UTEX 2576) protein is Glycerol-3-phosphate dehydrogenase [NAD(P)+].